Reading from the N-terminus, the 409-residue chain is Argininosuccinate synthase (409 aa).

ATP contacts are provided by residues 11–19 (AYSGGLDTS) and alanine 38. 2 residues coordinate L-citrulline: tyrosine 91 and serine 96. An ATP-binding site is contributed by glycine 121. L-aspartate-binding residues include threonine 123, asparagine 127, and aspartate 128. Position 127 (asparagine 127) interacts with L-citrulline. L-citrulline-binding residues include arginine 131, serine 182, serine 191, glutamate 267, and tyrosine 279.

It belongs to the argininosuccinate synthase family. Type 1 subfamily. As to quaternary structure, homotetramer.

The protein localises to the cytoplasm. It carries out the reaction L-citrulline + L-aspartate + ATP = 2-(N(omega)-L-arginino)succinate + AMP + diphosphate + H(+). Its pathway is amino-acid biosynthesis; L-arginine biosynthesis; L-arginine from L-ornithine and carbamoyl phosphate: step 2/3. This Xanthobacter autotrophicus (strain ATCC BAA-1158 / Py2) protein is Argininosuccinate synthase.